The primary structure comprises 120 residues: MVQRLTYRKRHSYATKSNQHRVVKTPGGKLIYQSTKKRASGPKCPVTGKRIQGIPHLRPTEYKRSRLSRNRRTVNRAYGGVLSGSAVRERIIRAFLVEEQKIVKKVLKIQKAKEKLAAKS.

This sequence belongs to the eukaryotic ribosomal protein eL34 family.

The sequence is that of Large ribosomal subunit protein eL34 (RPL34) from Nicotiana tabacum (Common tobacco).